The primary structure comprises 1388 residues: DNA-directed RNA polymerase subunit beta' (1388 aa).

Zn(2+) is bound by residues Cys-70, Cys-72, Cys-85, and Cys-88. Mg(2+)-binding residues include Asp-461, Asp-463, and Asp-465. Positions 808, 882, 889, and 892 each coordinate Zn(2+).

It belongs to the RNA polymerase beta' chain family. As to quaternary structure, the RNAP catalytic core consists of 2 alpha, 1 beta, 1 beta' and 1 omega subunit. When a sigma factor is associated with the core the holoenzyme is formed, which can initiate transcription. Mg(2+) is required as a cofactor. It depends on Zn(2+) as a cofactor.

It carries out the reaction RNA(n) + a ribonucleoside 5'-triphosphate = RNA(n+1) + diphosphate. DNA-dependent RNA polymerase catalyzes the transcription of DNA into RNA using the four ribonucleoside triphosphates as substrates. This Acidiphilium cryptum (strain JF-5) protein is DNA-directed RNA polymerase subunit beta'.